The chain runs to 452 residues: Glycine receptor subunit alpha-2 (452 aa).

A signal peptide spans 1–27 (MNRQLVNILTALFAFFLETNHFRTAFC). At 28-256 (KDHDSRSGKQ…KFHLERQMGY (229 aa)) the chain is on the extracellular side. N72 carries an N-linked (GlcNAc...) asparagine glycan. A glycine-binding site is contributed by R99. Position 99 (R99) interacts with strychnine. A glycan (N-linked (GlcNAc...) asparagine) is linked at N103. S163 provides a ligand contact to glycine. The cysteines at positions 172 and 186 are disulfide-linked. Zn(2+) contacts are provided by E226 and E228. A disulfide bridge connects residues C232 and C243. Glycine is bound at residue T238. H249 provides a ligand contact to Zn(2+). Residues 257–278 (YLIQMYIPSLLIVILSWVSFWI) traverse the membrane as a helical segment. Topologically, residues 279–283 (NMDAA) are cytoplasmic. The helical transmembrane segment at 284–304 (PARVALGITTVLTMTTQSSGS) threads the bilayer. Residues 305-315 (RASLPKVSYVK) lie on the Extracellular side of the membrane. A helical transmembrane segment spans residues 316–336 (AIDIWMAVCLLFVFAALLEYA). At 337–420 (AVNFVSRQHK…FVDRAKRIDT (84 aa)) the chain is on the cytoplasmic side. The chain crosses the membrane as a helical span at residues 421–441 (ISRAAFPLAFLIFNIFYWITY). Residues 442–452 (KIIRHEDVHKK) lie on the Extracellular side of the membrane.

It belongs to the ligand-gated ion channel (TC 1.A.9) family. Glycine receptor (TC 1.A.9.3) subfamily. GLRA2 sub-subfamily. Interacts with GLRB. Heteropentamer composed of GLRA2 and GLRB. Functional GLRB-GLRA2 heteropentamers contain four GLRA2 subunits and one GLRB subunit, although alternative subunit composition cannot be excluded. Homopentamer (in vitro). Both homopentamers and heteropentamers form functional ion channels, but their characteristics are subtly different.

The protein localises to the postsynaptic cell membrane. The protein resides in the synapse. Its subcellular location is the cell membrane. It localises to the cell projection. The enzyme catalyses chloride(in) = chloride(out). Channel opening is triggered by extracellular glycine. Channel opening is also triggered by taurine and beta-alanine. Inhibited by strychnine. Inhibited by picrotoxin. Channel activity is potentiated by 10-100 uM Zn(2+). Channel activity is marginally increased by 50 mM ethanol; it is strongly increased by a combination of 0.5 uM Zn(2+) and 50 mM ethanol. Channel activity is inhibited by 100-1000 uM Zn(2+). In terms of biological role, subunit of heteromeric glycine-gated chloride channels. Plays a role in synaptic plasticity. Contributes to the generation of inhibitory postsynaptic currents, and is involved in the down-regulation of neuronal excitability. Plays a role in cellular responses to ethanol. This chain is Glycine receptor subunit alpha-2, found in Homo sapiens (Human).